The primary structure comprises 391 residues: Somatostatin receptor type 1 (391 aa).

The interval 1 to 50 (MFPNGTASSPSSSPSPSPGSCGEGACSRGPGSGAADGMEEPGRNASQNGT) is disordered. Topologically, residues 1-56 (MFPNGTASSPSSSPSPSPGSCGEGACSRGPGSGAADGMEEPGRNASQNGTLSEGQG) are extracellular. Asn4 carries N-linked (GlcNAc...) asparagine glycosylation. Positions 8–20 (SSPSSSPSPSPGS) are enriched in low complexity. N-linked (GlcNAc...) asparagine glycans are attached at residues Asn44 and Asn48. A helical membrane pass occupies residues 57–84 (SAILISFIYSVVCLVGLCGNSMVIYVIL). Topologically, residues 85 to 94 (RYAKMKTATN) are cytoplasmic. Residues 95–120 (IYILNLAIADELLMLSVPFLVTSTLL) form a helical membrane-spanning segment. The Extracellular portion of the chain corresponds to 121–131 (RHWPFGALLCR). The cysteines at positions 130 and 208 are disulfide-linked. The helical transmembrane segment at 132 to 153 (LVLSVDAVNMFTSIYCLTVLSV) threads the bilayer. Residues 154-175 (DRYVAVVHPIKAARYRRPTVAK) lie on the Cytoplasmic side of the membrane. Residues 176 to 196 (VVNLGVWVLSLLVILPIVVFS) traverse the membrane as a helical segment. Residues 197-219 (RTAANSDGTVACNMLMPEPAQRW) lie on the Extracellular side of the membrane. The helical transmembrane segment at 220 to 244 (LVGFVLYTFLMGFLLPVGAICLCYV) threads the bilayer. The Cytoplasmic portion of the chain corresponds to 245–270 (LIIAKMRMVALKAGWQQRKRSERKIT). Residues 271-296 (LMVMMVVMVFVICWMPFYVVQLVNVF) form a helical membrane-spanning segment. At 297 to 303 (AEQDDAT) the chain is on the extracellular side. Residues 304-327 (VSQLSVILGYANSCANPILYGFLS) traverse the membrane as a helical segment. At 328 to 391 (DNFKRSFQRI…GTCASRISTL (64 aa)) the chain is on the cytoplasmic side. Cys339 carries the S-palmitoyl cysteine lipid modification.

This sequence belongs to the G-protein coupled receptor 1 family. As to expression, jejunum and stomach.

The protein resides in the cell membrane. In terms of biological role, receptor for somatostatin with higher affinity for somatostatin-14 than -28. This receptor is coupled via pertussis toxin sensitive G proteins to inhibition of adenylyl cyclase. In addition it stimulates phosphotyrosine phosphatase and Na(+)/H(+) exchanger via pertussis toxin insensitive G proteins. This chain is Somatostatin receptor type 1 (Sstr1), found in Mus musculus (Mouse).